The sequence spans 692 residues: Peroxisomal primary amine oxidase (692 aa).

Positions 1–22 (MERLRQIASQATAASAAPARPA) are enriched in low complexity. Residues 1–26 (MERLRQIASQATAASAAPARPAHPLD) are disordered. N-linked (GlcNAc...) asparagine glycosylation is present at N243. 317-328 (ALDIGEYGAGYM) contacts substrate. Catalysis depends on D319, which acts as the Proton acceptor. C338 and C364 are oxidised to a cystine. Residue 402-407 (AANYEY) coordinates substrate. Y405 serves as the catalytic Schiff-base intermediate with substrate; via topaquinone. At Y405 the chain carries 2',4',5'-topaquinone. 2 residues coordinate Cu cation: H456 and H458. The Mn(2+) site is built by D465, D613, and I614. H624 contacts Cu cation.

The protein belongs to the copper/topaquinone oxidase family. Homodimer. The cofactor is Cu cation. It depends on Zn(2+) as a cofactor. L-topaquinone is required as a cofactor. Mn(2+) serves as cofactor. Post-translationally, topaquinone (TPQ) is generated by copper-dependent autoxidation of a specific tyrosyl residue.

The protein resides in the peroxisome. It catalyses the reaction a primary methyl amine + O2 + H2O = an aldehyde + H2O2 + NH4(+). The sequence is that of Peroxisomal primary amine oxidase (AMO) from Pichia angusta (Yeast).